The chain runs to 424 residues: Dihydroorotase (424 aa).

Positions 61 and 63 each coordinate Zn(2+). Substrate contacts are provided by residues 63-65 (HLR) and N95. Residues D153, H180, and H233 each coordinate Zn(2+). N279 contacts substrate. Residue D306 participates in Zn(2+) binding. The active site involves D306. Residue H310 coordinates substrate.

The protein belongs to the metallo-dependent hydrolases superfamily. DHOase family. Class I DHOase subfamily. The cofactor is Zn(2+).

The catalysed reaction is (S)-dihydroorotate + H2O = N-carbamoyl-L-aspartate + H(+). The protein operates within pyrimidine metabolism; UMP biosynthesis via de novo pathway; (S)-dihydroorotate from bicarbonate: step 3/3. Catalyzes the reversible cyclization of carbamoyl aspartate to dihydroorotate. The chain is Dihydroorotase from Pelobacter propionicus (strain DSM 2379 / NBRC 103807 / OttBd1).